We begin with the raw amino-acid sequence, 98 residues long: NADH-ubiquinone oxidoreductase chain 4L (98 aa).

3 consecutive transmembrane segments (helical) span residues 1–21 (MMSI…GVLI), 28–48 (STLL…ALII), and 59–79 (APLI…ALLV).

Belongs to the complex I subunit 4L family. As to quaternary structure, core subunit of respiratory chain NADH dehydrogenase (Complex I) which is composed of 45 different subunits.

The protein localises to the mitochondrion inner membrane. The catalysed reaction is a ubiquinone + NADH + 5 H(+)(in) = a ubiquinol + NAD(+) + 4 H(+)(out). Core subunit of the mitochondrial membrane respiratory chain NADH dehydrogenase (Complex I) which catalyzes electron transfer from NADH through the respiratory chain, using ubiquinone as an electron acceptor. Part of the enzyme membrane arm which is embedded in the lipid bilayer and involved in proton translocation. The protein is NADH-ubiquinone oxidoreductase chain 4L (MT-ND4L) of Lagostrophus fasciatus (Banded hare-wallaby).